Here is a 157-residue protein sequence, read N- to C-terminus: Protein Smg homolog (157 aa).

This sequence belongs to the Smg family.

This chain is Protein Smg homolog, found in Xanthomonas campestris pv. campestris (strain 8004).